The primary structure comprises 252 residues: uncharacterized protein (252 aa).

The N-terminal stretch at 1 to 22 (MIHSKRLRLWLYLVLLAVFISA) is a signal peptide. The N-palmitoyl cysteine moiety is linked to residue cysteine 23. Residue cysteine 23 is the site of S-diacylglycerol cysteine attachment.

The protein belongs to the staphylococcal tandem lipoprotein family.

The protein localises to the cell membrane. This is an uncharacterized protein from Staphylococcus aureus (strain MW2).